The following is a 124-amino-acid chain: V-type proton ATPase subunit F (124 aa).

The protein belongs to the V-ATPase F subunit family. V-ATPase is a heteromultimeric enzyme composed of a peripheral catalytic V1 complex (components A to H) attached to an integral membrane V0 proton pore complex (components: a, c, c', c'', d, e, f and VOA1).

It is found in the vacuole membrane. Functionally, subunit of the V1 complex of vacuolar(H+)-ATPase (V-ATPase), a multisubunit enzyme composed of a peripheral complex (V1) that hydrolyzes ATP and a membrane integral complex (V0) that translocates protons. V-ATPase is responsible for acidifying and maintaining the pH of intracellular compartments. The chain is V-type proton ATPase subunit F (vma7) from Neosartorya fischeri (strain ATCC 1020 / DSM 3700 / CBS 544.65 / FGSC A1164 / JCM 1740 / NRRL 181 / WB 181) (Aspergillus fischerianus).